The following is a 458-amino-acid chain: Argininosuccinate lyase (458 aa).

This sequence belongs to the lyase 1 family. Argininosuccinate lyase subfamily.

It localises to the cytoplasm. It catalyses the reaction 2-(N(omega)-L-arginino)succinate = fumarate + L-arginine. The protein operates within amino-acid biosynthesis; L-arginine biosynthesis; L-arginine from L-ornithine and carbamoyl phosphate: step 3/3. The sequence is that of Argininosuccinate lyase from Neisseria meningitidis serogroup C (strain 053442).